The primary structure comprises 721 residues: Polyribonucleotide nucleotidyltransferase (721 aa).

The Mg(2+) site is built by Asp-495 and Asp-501. The 60-residue stretch at 562–621 folds into the KH domain; that stretch reads PRLLSFRIDPELIGTVIGPGGRTIKGITERTNTKIDIEDGGIVTIASHDGAAAEEAQKII. One can recognise an S1 motif domain in the interval 631–699; that stretch reads GEIFPGVVTR…SRGRINLTLR (69 aa).

The protein belongs to the polyribonucleotide nucleotidyltransferase family. Mg(2+) serves as cofactor.

It localises to the cytoplasm. It catalyses the reaction RNA(n+1) + phosphate = RNA(n) + a ribonucleoside 5'-diphosphate. Its function is as follows. Involved in mRNA degradation. Catalyzes the phosphorolysis of single-stranded polyribonucleotides processively in the 3'- to 5'-direction. This is Polyribonucleotide nucleotidyltransferase from Prochlorococcus marinus subsp. pastoris (strain CCMP1986 / NIES-2087 / MED4).